The following is a 336-amino-acid chain: tRNA N6-adenosine threonylcarbamoyltransferase (336 aa).

Residues His114 and His118 each coordinate Fe cation. Substrate is bound by residues 136–140, Asp169, Gly182, Asp186, and Asn275; that span reads LVSGG. Residue Asp301 coordinates Fe cation.

Belongs to the KAE1 / TsaD family. The cofactor is Fe(2+).

It localises to the cytoplasm. It catalyses the reaction L-threonylcarbamoyladenylate + adenosine(37) in tRNA = N(6)-L-threonylcarbamoyladenosine(37) in tRNA + AMP + H(+). In terms of biological role, required for the formation of a threonylcarbamoyl group on adenosine at position 37 (t(6)A37) in tRNAs that read codons beginning with adenine. Is involved in the transfer of the threonylcarbamoyl moiety of threonylcarbamoyl-AMP (TC-AMP) to the N6 group of A37, together with TsaE and TsaB. TsaD likely plays a direct catalytic role in this reaction. In Streptococcus sanguinis (strain SK36), this protein is tRNA N6-adenosine threonylcarbamoyltransferase.